Here is a 198-residue protein sequence, read N- to C-terminus: Phosphoheptose isomerase (198 aa).

The 159-residue stretch at 40-198 (IVTALRSGRK…IEAALMQDLS (159 aa)) folds into the SIS domain. Residue 55–57 (NGG) participates in substrate binding. Residues H64 and E68 each contribute to the Zn(2+) site. Substrate contacts are provided by residues E68, 97–98 (ND), 123–125 (STS), S128, and Q175. Zn(2+) is bound by residues Q175 and H183.

The protein belongs to the SIS family. GmhA subfamily. Homotetramer. Zn(2+) is required as a cofactor.

It localises to the cytoplasm. It carries out the reaction 2 D-sedoheptulose 7-phosphate = D-glycero-alpha-D-manno-heptose 7-phosphate + D-glycero-beta-D-manno-heptose 7-phosphate. It participates in carbohydrate biosynthesis; D-glycero-D-manno-heptose 7-phosphate biosynthesis; D-glycero-alpha-D-manno-heptose 7-phosphate and D-glycero-beta-D-manno-heptose 7-phosphate from sedoheptulose 7-phosphate: step 1/1. In terms of biological role, catalyzes the isomerization of sedoheptulose 7-phosphate in D-glycero-D-manno-heptose 7-phosphate. This Bradyrhizobium sp. (strain BTAi1 / ATCC BAA-1182) protein is Phosphoheptose isomerase.